A 290-amino-acid chain; its full sequence is 4-diphosphocytidyl-2-C-methyl-D-erythritol kinase (290 aa).

The active site involves lysine 8. 92-102 (PISAGLAGGST) provides a ligand contact to ATP. Residue aspartate 134 is part of the active site.

It belongs to the GHMP kinase family. IspE subfamily.

It catalyses the reaction 4-CDP-2-C-methyl-D-erythritol + ATP = 4-CDP-2-C-methyl-D-erythritol 2-phosphate + ADP + H(+). It participates in isoprenoid biosynthesis; isopentenyl diphosphate biosynthesis via DXP pathway; isopentenyl diphosphate from 1-deoxy-D-xylulose 5-phosphate: step 3/6. Catalyzes the phosphorylation of the position 2 hydroxy group of 4-diphosphocytidyl-2C-methyl-D-erythritol. This is 4-diphosphocytidyl-2-C-methyl-D-erythritol kinase from Caldicellulosiruptor saccharolyticus (strain ATCC 43494 / DSM 8903 / Tp8T 6331).